Consider the following 495-residue polypeptide: Protein adenylyltransferase Fic (495 aa).

The interval 1–27 (MGTEAEQPSPPSPPAQQQEQTNPPLWN) is disordered. The chain crosses the membrane as a helical span at residues 36–55 (LYRLVLFFIAGSLAAWTIHA). TPR repeat units lie at residues 121-154 (ALVSLRMAQDMYLAGKDDKASRLFEHALALAPRH) and 155-189 (PEVLLRYGEFLEHSQRNIVLADQYYFQALTISPSN). Positions 246–251 (SVGIEG) match the Inhibitory (S/T)XXXE(G/N) motif motif. Residues E250 and 331–334 (VGGH) contribute to the ATP site. The Fido domain maps to 300-435 (ITIKDILELH…IRPFVRFIAD (136 aa)). H378 is a catalytic residue. ATP-binding positions include 382-389 (DGNGRTSR), 414-415 (YY), and N422.

This sequence belongs to the fic family. As to quaternary structure, homodimer.

It is found in the membrane. The catalysed reaction is L-tyrosyl-[protein] + ATP = O-(5'-adenylyl)-L-tyrosyl-[protein] + diphosphate. It carries out the reaction L-threonyl-[protein] + ATP = 3-O-(5'-adenylyl)-L-threonyl-[protein] + diphosphate. The enzyme catalyses 3-O-(5'-adenylyl)-L-threonyl-[protein] + H2O = L-threonyl-[protein] + AMP + H(+). Its activity is regulated as follows. The side chain of Glu-250 determines which of the two opposing activities (AMPylase or de-AMPylase) will take place. In response to endoplasmic reticulum stress, mediates de-AMPylase activity. Adenylyltransferase activity is inhibited by the inhibitory helix present at the N-terminus: Glu-250 binds ATP and competes with ATP-binding at Arg-389, thereby preventing adenylyltransferase activity. In unstressed cells, disengagement of Glu-250 promotes adenylyltransferase activity. Activation dissociates ATP-binding from Glu-250, allowing ordered binding of the entire ATP moiety with the alpha-phosphate in an orientation that is productive for accepting an incoming target hydroxyl side chain. In terms of biological role, protein that can both mediate the addition of adenosine 5'-monophosphate (AMP) to specific residues of target proteins (AMPylation), and the removal of the same modification from target proteins (de-AMPylation), depending on the context. The side chain of Glu-250 determines which of the two opposing activities (AMPylase or de-AMPylase) will take place. Acts as a key regulator of the unfolded protein response (UPR) by mediating AMPylation or de-AMPylation of Hsc70-3/BiP. In unstressed cells, acts as an adenylyltransferase by mediating AMPylation of Hsc70-3/BiP at 'Thr-518', thereby inactivating it. In response to endoplasmic reticulum stress, acts as a phosphodiesterase by mediating removal of ATP (de-AMPylation) from Hsc70-3/BiP at 'Thr-518', leading to restore HSPA5/BiP activity. This Drosophila yakuba (Fruit fly) protein is Protein adenylyltransferase Fic.